We begin with the raw amino-acid sequence, 634 residues long: SPARC-like protein 1 (634 aa).

Positions 1-16 (MKAVLLLLYALGIAAA) are cleaved as a signal peptide. The interval 50-335 (ADIEKHPNHK…DDSKHGASDD (286 aa)) is disordered. Residues 51 to 62 (DIEKHPNHKAEK) show a composition bias toward basic and acidic residues. Residues Ser68, Ser76, and Ser84 each carry the phosphoserine modification. Positions 73–83 (HEQSTEQDKTY) are enriched in basic and acidic residues. Residues 89 to 99 (LKDEEDGDGDL) show a composition bias toward acidic residues. The span at 131 to 144 (TVSTPFVDSDQPAN) shows a compositional bias: polar residues. Asn144 is a glycosylation site (N-linked (GlcNAc...) asparagine). Ser151 and Ser159 each carry phosphoserine. Acidic residues-rich tracts occupy residues 189-198 (EKEEEEDPED) and 205-214 (NQEEEKEPPE). Positions 233-258 (QESSQPTQISKTKNDFEQGSQGQEGD) are enriched in polar residues. Position 259 is a phosphoserine (Ser259). Composition is skewed to basic and acidic residues over residues 263–276 (GEDKAAGSKEHLPH) and 292–303 (GNRKDTDEEKAV). Residues Ser333 and Ser340 each carry the phosphoserine modification. The tract at residues 360 to 398 (EETPDESENRSEAGDNQGAKKAESSPNAEPSDEGNSRGH) is disordered. The span at 366 to 382 (SENRSEAGDNQGAKKAE) shows a compositional bias: basic and acidic residues. N-linked (GlcNAc...) asparagine glycosylation occurs at Asn368. Phosphoserine occurs at positions 370 and 390. The 23-residue stretch at 402–424 (SCMNFQCKRGHTCKTDQHGKPHC) folds into the Follistatin-like domain. 7 disulfide bridges follow: Cys403–Cys414, Cys408–Cys424, Cys426–Cys460, Cys432–Cys453, Cys442–Cys479, Cys485–Cys596, and Cys604–Cys620. The region spanning 420 to 481 (GKPHCVCQDP…QLDYFGACKS (62 aa)) is the Kazal-like domain. Residue Asn446 is glycosylated (N-linked (GlcNAc...) asparagine). The EF-hand domain occupies 592 to 627 (PMEHCITRFFEECDPNKDKHITLKEWGHCFGIKEED). Ca(2+)-binding residues include Asp605, Asn607, Asp609, His611, and Glu616.

This sequence belongs to the SPARC family. Expressed in many types of neurons in the brain.

Its subcellular location is the secreted. The protein localises to the extracellular space. It localises to the extracellular matrix. The sequence is that of SPARC-like protein 1 (Sparcl1) from Rattus norvegicus (Rat).